A 164-amino-acid chain; its full sequence is Probable metalloprotease y4qB (164 aa).

Residues 5 to 142 (IWIPESVVEA…WLPHAWIGQL (138 aa)) form the MPN domain. The Zn(2+) site is built by H89, H91, and D103.

The protein belongs to the peptidase M67B family.

The polypeptide is Probable metalloprotease y4qB (Sinorhizobium fredii (strain NBRC 101917 / NGR234)).